The chain runs to 441 residues: Protein MONOCULM 1 (441 aa).

The tract at residues 1–33 is disordered; that stretch reads MLRSLHSSSSSDTDNNSGGCKNNGGGGGEAAAA. Residues 7 to 20 are compositionally biased toward low complexity; the sequence is SSSSSDTDNNSGGC. A compositionally biased stretch (gly residues) spans 21-33; sequence KNNGGGGGEAAAA. A GRAS domain is found at 41–437; that stretch reads RAVAAAAPST…RPLLSVSAWQ (397 aa). Residues 48-126 are leucine repeat I (LRI); the sequence is PSTRDLLLAC…GAARPASSGA (79 aa). The interval 127 to 195 is VHIID; sequence YLAFNQIAPF…LGPPEVRVTG (69 aa). Residues 158 to 162 carry the VHIID motif; it reads VHILD. Residues 205-256 are leucine repeat II (LRII); that stretch reads RTGNRLRAFARSIHLPFHFTPLLLSCATTAPHHVAGTSTGAAAAASTAAAAT. The PFYRE stretch occupies residues 266-361; that stretch reads LAVNCVMFLH…QEVLGREIEA (96 aa). The SAW stretch occupies residues 364 to 437; the sequence is GPSGGRWWRG…RPLLSVSAWQ (74 aa).

This sequence belongs to the GRAS family. In terms of tissue distribution, expressed in a small number of epidermal or subepidermal cells at the leaf axils, in axillary meristems and the entire tiller buds. Undetected in the shoot apical meristem.

Its subcellular location is the nucleus. Functionally, putative transcription regulator that controls rice tillering by initiating axillary buds and promoting their outgrowth. Rice tiller is a specialized grain-bearing branch that is formed on the unelongated basal internode and grows independently of the mother stem (culm) by means of its own adventitious roots. This is Protein MONOCULM 1 from Oryza sativa subsp. japonica (Rice).